The following is a 69-amino-acid chain: Putative membrane protein insertion efficiency factor (69 aa).

It belongs to the UPF0161 family.

The protein resides in the cell inner membrane. Functionally, could be involved in insertion of integral membrane proteins into the membrane. The polypeptide is Putative membrane protein insertion efficiency factor (Chromobacterium violaceum (strain ATCC 12472 / DSM 30191 / JCM 1249 / CCUG 213 / NBRC 12614 / NCIMB 9131 / NCTC 9757 / MK)).